A 354-amino-acid chain; its full sequence is Guanine nucleotide-binding protein G(i) subunit alpha-3 (354 aa).

Glycine 2 is lipidated: N-myristoyl glycine. Cysteine 3 carries S-palmitoyl cysteine lipidation. A G-alpha domain is found at 32–354; the sequence is KEVKLLLLGA…KNNLKECGLY (323 aa). Residues 35–48 are G1 motif; that stretch reads KLLLLGAGESGKST. Residues glycine 42, glutamate 43, serine 44, glycine 45, lysine 46, serine 47, threonine 48, aspartate 150, serine 151, leucine 175, arginine 176, threonine 177, arginine 178, valine 179, lysine 180, threonine 181, valine 201, glycine 203, asparagine 269, lysine 270, aspartate 272, leucine 273, cysteine 325, alanine 326, and threonine 327 each contribute to the GTP site. Serine 47 is a Mg(2+) binding site. The tract at residues 173-181 is G2 motif; that stretch reads DVLRTRVKT. Threonine 181 contributes to the Mg(2+) binding site. Residues 196 to 205 form a G3 motif region; it reads FKMFDVGGQR. Residues 265–272 are G4 motif; sequence ILFLNKKD. The G5 motif stretch occupies residues 324-329; sequence TCATDT.

It belongs to the G-alpha family. G(i/o/t/z) subfamily. As to quaternary structure, heterotrimeric G proteins are composed of 3 units; alpha, beta and gamma. The alpha subunit contains the guanine nucleotide binding site. GTP binding causes dissociation of the heterotrimer, liberating the individual subunits so that they can interact with downstream effector proteins. Forms a complex with CCDC88A/GIV and EGFR which leads to enhanced EGFR signaling and triggering of cell migration; ligand stimulation is required for recruitment of GNAI3 to the complex. Interacts (inactive GDP-bound form) with CCDC88A/GIV (via GBA motif); the interaction leads to activation of GNAI3. Interacts (inactive GDP-bound form) with CCDC88C/DAPLE (via GBA motif); the interaction leads to activation of GNAI3. Interacts (inactive GDP-bound form) with NUCB1 (via GBA motif) and NUCB2 (via GBA motif); the interaction leads to activation of GNAI3. Interacts (inactive GDP-bound form) with PLCD4 (via GBA motif); the interaction leads to activation of GNAI3. Interacts with INSR; the interaction is probably mediated by CCDC88A/GIV. Interacts with GPSM1. Interacts (GDP-bound form) with GPSM2 (via GoLoco domains). Does not interact with RGS2. Interacts with RGS8 and RGS10; this strongly enhances the intrinsic GTPase activity. Interacts with RGS16; this strongly enhances the intrinsic GTPase activity. Interacts with RGS12. Interacts (via active GTP- or inactive GDP-bound form) with RGS14. Interacts (via active GTP-bound form) with TRPC5 (via ANK repeats) in a homotetrameric ion channel; the interaction is direct and activates the channel activity. As to expression, ubiquitously expressed.

The protein localises to the cytoplasm. The protein resides in the cell membrane. Its subcellular location is the cytoskeleton. It is found in the microtubule organizing center. It localises to the centrosome. Heterotrimeric guanine nucleotide-binding proteins (G proteins) function as transducers downstream of G protein-coupled receptors (GPCRs) in numerous signaling cascades. The alpha chain contains the guanine nucleotide binding site and alternates between an active, GTP-bound state and an inactive, GDP-bound state. Signaling by an activated GPCR promotes GDP release and GTP binding. The alpha subunit has a low GTPase activity that converts bound GTP to GDP, thereby terminating the signal. Both GDP release and GTP hydrolysis are modulated by numerous regulatory proteins. Signaling is mediated via effector proteins, such as adenylate cyclase. Inhibits adenylate cyclase activity, leading to decreased intracellular cAMP levels. Stimulates the activity of receptor-regulated K(+) channels. The active GTP-bound form prevents the association of RGS14 with centrosomes and is required for the translocation of RGS14 from the cytoplasm to the plasma membrane. May play a role in cell division. The active GTP-bound form activates the calcium permeant TRPC5 ion channels. The chain is Guanine nucleotide-binding protein G(i) subunit alpha-3 (GNAI3) from Cavia porcellus (Guinea pig).